The sequence spans 115 residues: Parathyroid hormone (115 aa).

Positions 1-25 (MIPAKDMAKVMIVMLAICFLTKSDG) are cleaved as a signal peptide. The propeptide occupies 26 to 31 (KSVKKR). Residues 51–69 (RVEWLRKKLQDVHNFIALG) form an important for receptor binding region. Residues 72-96 (LAPRDAGSQRPRKKEDNILVESHEK) are disordered. Positions 84–96 (KKEDNILVESHEK) are enriched in basic and acidic residues.

Belongs to the parathyroid hormone family. In terms of assembly, interacts with PTH1R (via N-terminal extracellular domain).

Its subcellular location is the secreted. Its function is as follows. Parathyroid hormone elevates calcium level by dissolving the salts in bone and preventing their renal excretion. Acts by binding to its receptor, PTH1R, activating G protein-coupled receptor signaling. Stimulates [1-14C]-2-deoxy-D-glucose (2DG) transport and glycogen synthesis in osteoblastic cells. The sequence is that of Parathyroid hormone (PTH) from Macaca fascicularis (Crab-eating macaque).